A 417-amino-acid chain; its full sequence is Exodeoxyribonuclease 7 large subunit (417 aa).

This sequence belongs to the XseA family. In terms of assembly, heterooligomer composed of large and small subunits.

It localises to the cytoplasm. The catalysed reaction is Exonucleolytic cleavage in either 5'- to 3'- or 3'- to 5'-direction to yield nucleoside 5'-phosphates.. Bidirectionally degrades single-stranded DNA into large acid-insoluble oligonucleotides, which are then degraded further into small acid-soluble oligonucleotides. This chain is Exodeoxyribonuclease 7 large subunit, found in Corynebacterium glutamicum (strain ATCC 13032 / DSM 20300 / JCM 1318 / BCRC 11384 / CCUG 27702 / LMG 3730 / NBRC 12168 / NCIMB 10025 / NRRL B-2784 / 534).